A 394-amino-acid polypeptide reads, in one-letter code: Phosphopentomutase (394 aa).

Positions 14, 287, 292, 328, 329, and 340 each coordinate Mn(2+).

Belongs to the phosphopentomutase family. The cofactor is Mn(2+).

The protein resides in the cytoplasm. It carries out the reaction 2-deoxy-alpha-D-ribose 1-phosphate = 2-deoxy-D-ribose 5-phosphate. The catalysed reaction is alpha-D-ribose 1-phosphate = D-ribose 5-phosphate. Its pathway is carbohydrate degradation; 2-deoxy-D-ribose 1-phosphate degradation; D-glyceraldehyde 3-phosphate and acetaldehyde from 2-deoxy-alpha-D-ribose 1-phosphate: step 1/2. In terms of biological role, isomerase that catalyzes the conversion of deoxy-ribose 1-phosphate (dRib-1-P) and ribose 1-phosphate (Rib-1-P) to deoxy-ribose 5-phosphate (dRib-5-P) and ribose 5-phosphate (Rib-5-P), respectively. The polypeptide is Phosphopentomutase (Listeria monocytogenes serotype 4b (strain CLIP80459)).